Here is a 331-residue protein sequence, read N- to C-terminus: Aspartate carbamoyltransferase catalytic subunit (331 aa).

2 residues coordinate carbamoyl phosphate: Arg76 and Thr77. Lys104 contributes to the L-aspartate binding site. Residues Arg126, His154, and Gln157 each contribute to the carbamoyl phosphate site. Residues Arg187 and Arg246 each coordinate L-aspartate. Positions 287 and 288 each coordinate carbamoyl phosphate.

The protein belongs to the aspartate/ornithine carbamoyltransferase superfamily. ATCase family. Heterododecamer (2C3:3R2) of six catalytic PyrB chains organized as two trimers (C3), and six regulatory PyrI chains organized as three dimers (R2).

It catalyses the reaction carbamoyl phosphate + L-aspartate = N-carbamoyl-L-aspartate + phosphate + H(+). It functions in the pathway pyrimidine metabolism; UMP biosynthesis via de novo pathway; (S)-dihydroorotate from bicarbonate: step 2/3. Catalyzes the condensation of carbamoyl phosphate and aspartate to form carbamoyl aspartate and inorganic phosphate, the committed step in the de novo pyrimidine nucleotide biosynthesis pathway. The chain is Aspartate carbamoyltransferase catalytic subunit from Dehalococcoides mccartyi (strain CBDB1).